A 480-amino-acid polypeptide reads, in one-letter code: Glycogen synthase (480 aa).

Residue K15 coordinates ADP-alpha-D-glucose.

Belongs to the glycosyltransferase 1 family. Bacterial/plant glycogen synthase subfamily.

The catalysed reaction is [(1-&gt;4)-alpha-D-glucosyl](n) + ADP-alpha-D-glucose = [(1-&gt;4)-alpha-D-glucosyl](n+1) + ADP + H(+). Its pathway is glycan biosynthesis; glycogen biosynthesis. Synthesizes alpha-1,4-glucan chains using ADP-glucose. In Rhizobium leguminosarum bv. trifolii (strain WSM2304), this protein is Glycogen synthase.